A 92-amino-acid chain; its full sequence is YcgL domain-containing protein Sama_1929 (92 aa).

The YcgL domain occupies 1–85; the sequence is MICAVYKSSR…PKDNLLTQHR (85 aa).

This is YcgL domain-containing protein Sama_1929 from Shewanella amazonensis (strain ATCC BAA-1098 / SB2B).